Consider the following 384-residue polypeptide: Dual specificity protein phosphatase 9 (384 aa).

Ser-16 is modified (phosphoserine). In terms of domain architecture, Rhodanese spans 18 to 139; the sequence is PRPRLLLLDC…FQAECPHLCE (122 aa). The region spanning 203-346 is the Tyrosine-protein phosphatase domain; it reads FPVQILPNLY…LLDFERSLRL (144 aa). Ser-262 carries the phosphoserine modification. Cys-290 (phosphocysteine intermediate) is an active-site residue. The segment at 348-384 is disordered; it reads ERHSQEQGSGGQASAASNPPSFFTTPTSDGAFELAPT. Phosphoserine is present on Ser-351. Residues 359 to 375 show a composition bias toward polar residues; sequence QASAASNPPSFFTTPTS.

Belongs to the protein-tyrosine phosphatase family. Non-receptor class dual specificity subfamily.

The protein resides in the cytoplasm. The catalysed reaction is O-phospho-L-tyrosyl-[protein] + H2O = L-tyrosyl-[protein] + phosphate. It carries out the reaction O-phospho-L-seryl-[protein] + H2O = L-seryl-[protein] + phosphate. It catalyses the reaction O-phospho-L-threonyl-[protein] + H2O = L-threonyl-[protein] + phosphate. In terms of biological role, inactivates MAP kinases. Has a specificity for the ERK family. The protein is Dual specificity protein phosphatase 9 (DUSP9) of Homo sapiens (Human).